Here is an 875-residue protein sequence, read N- to C-terminus: Aminopeptidase M1-B (875 aa).

A required for membrane association region spans residues 96 to 203 (IGEGVLKMDF…MSTYLVAIVV (108 aa)). Residues E136 and 269–273 (GAMEN) contribute to the substrate site. H305 is a binding site for Zn(2+). E306 acts as the Proton acceptor in catalysis. Zn(2+) is bound by residues H309 and E328. Residues 722–723 (LL) carry the Dileucine internalization motif motif.

This sequence belongs to the peptidase M1 family. In terms of assembly, homodimer. Zn(2+) serves as cofactor.

It is found in the membrane. Its subcellular location is the microsome membrane. The protein localises to the cytoplasm. It carries out the reaction Release of an N-terminal amino acid, Xaa-|-Yaa- from a peptide, amide or arylamide. Xaa is preferably Ala, but may be most amino acids including Pro (slow action). When a terminal hydrophobic residue is followed by a prolyl residue, the two may be released as an intact Xaa-Pro dipeptide.. This chain is Aminopeptidase M1-B, found in Oryza sativa subsp. japonica (Rice).